Consider the following 419-residue polypeptide: Gamma-glutamyl phosphate reductase (419 aa).

It belongs to the gamma-glutamyl phosphate reductase family.

Its subcellular location is the cytoplasm. It catalyses the reaction L-glutamate 5-semialdehyde + phosphate + NADP(+) = L-glutamyl 5-phosphate + NADPH + H(+). The protein operates within amino-acid biosynthesis; L-proline biosynthesis; L-glutamate 5-semialdehyde from L-glutamate: step 2/2. Catalyzes the NADPH-dependent reduction of L-glutamate 5-phosphate into L-glutamate 5-semialdehyde and phosphate. The product spontaneously undergoes cyclization to form 1-pyrroline-5-carboxylate. This Nitratidesulfovibrio vulgaris (strain DP4) (Desulfovibrio vulgaris) protein is Gamma-glutamyl phosphate reductase.